A 251-amino-acid chain; its full sequence is Imidazole glycerol phosphate synthase subunit HisF (251 aa).

Residues aspartate 12 and aspartate 131 contribute to the active site.

This sequence belongs to the HisA/HisF family. In terms of assembly, heterodimer of HisH and HisF.

Its subcellular location is the cytoplasm. It carries out the reaction 5-[(5-phospho-1-deoxy-D-ribulos-1-ylimino)methylamino]-1-(5-phospho-beta-D-ribosyl)imidazole-4-carboxamide + L-glutamine = D-erythro-1-(imidazol-4-yl)glycerol 3-phosphate + 5-amino-1-(5-phospho-beta-D-ribosyl)imidazole-4-carboxamide + L-glutamate + H(+). Its pathway is amino-acid biosynthesis; L-histidine biosynthesis; L-histidine from 5-phospho-alpha-D-ribose 1-diphosphate: step 5/9. IGPS catalyzes the conversion of PRFAR and glutamine to IGP, AICAR and glutamate. The HisF subunit catalyzes the cyclization activity that produces IGP and AICAR from PRFAR using the ammonia provided by the HisH subunit. This Streptomyces avermitilis (strain ATCC 31267 / DSM 46492 / JCM 5070 / NBRC 14893 / NCIMB 12804 / NRRL 8165 / MA-4680) protein is Imidazole glycerol phosphate synthase subunit HisF.